We begin with the raw amino-acid sequence, 958 residues long: Translation initiation factor IF-2 (958 aa).

Disordered regions lie at residues 67–95 (APAASRPAAPAPGPAAPKAPAPAPAAPAP) and 111–355 (PAPA…VPRG). The segment covering 75 to 95 (APAPGPAAPKAPAPAPAAPAP) has biased composition (pro residues). Residues 140–161 (PAPARQGGQAPRPGGPRPGNNP) are compositionally biased toward low complexity. The span at 195-206 (RGERRNDGERPG) shows a compositional bias: basic and acidic residues. Low complexity predominate over residues 209-221 (RPAAGAGGPRPAA). Positions 228–241 (PGAPRPGAPRPGAP) are enriched in pro residues. The segment covering 268–325 (GGAGRPGGAGRPGGGPGRPGGAPGAGTGGGAPAGGGFGKGGRGRGGTQGAFGKGGAGR) has biased composition (gly residues). Positions 326–335 (GKQRKSKRAK) are enriched in basic residues. A tr-type G domain is found at 450-621 (ARAPVVTVMG…AVLLTADAAL (172 aa)). The interval 459–466 (GHVDHGKT) is G1. 459–466 (GHVDHGKT) contacts GTP. Residues 484–488 (GITQH) are G2. The interval 509–512 (DTPG) is G3. GTP is bound by residues 509–513 (DTPGH) and 563–566 (NKID). The G4 stretch occupies residues 563-566 (NKID). The tract at residues 599–601 (SAR) is G5.

This sequence belongs to the TRAFAC class translation factor GTPase superfamily. Classic translation factor GTPase family. IF-2 subfamily.

The protein localises to the cytoplasm. In terms of biological role, one of the essential components for the initiation of protein synthesis. Protects formylmethionyl-tRNA from spontaneous hydrolysis and promotes its binding to the 30S ribosomal subunits. Also involved in the hydrolysis of GTP during the formation of the 70S ribosomal complex. The polypeptide is Translation initiation factor IF-2 (Paenarthrobacter aurescens (strain TC1)).